A 352-amino-acid chain; its full sequence is C-X-C chemokine receptor type 4 (352 aa).

An important for chemokine binding and signaling region spans residues Met-1–Tyr-21. Residues Met-1–Arg-38 are Extracellular-facing. Sulfotyrosine is present on Tyr-7. The N-linked (GlcNAc...) asparagine glycan is linked to Asn-11. Tyr-12 carries the sulfotyrosine modification. Residue Ser-18 is glycosylated (O-linked (Xyl...) (chondroitin sulfate) serine). Position 21 is a sulfotyrosine (Tyr-21). 2 disulfides stabilise this stretch: Cys-28–Cys-274 and Cys-109–Cys-186. A helical membrane pass occupies residues Ile-39–Met-63. Over Gly-64–Arg-77 the chain is Cytoplasmic. A helical membrane pass occupies residues Leu-78–Val-99. The interval Trp-94–Asp-97 is chemokine binding. Topologically, residues Ala-100–Lys-110 are extracellular. A helical transmembrane segment spans residues Ala-111–Ile-130. Positions His-113 to Thr-117 are chemokine binding. At Ser-131–Lys-154 the chain is on the cytoplasmic side. The Important for signaling motif lies at Asp-133–Tyr-135. The segment at Tyr-135–Pro-147 is involved in dimerization; when bound to chemokine. The helical transmembrane segment at Val-155–Phe-174 threads the bilayer. Residues Ala-175 to Trp-195 are Extracellular-facing. A chemokine binding, important for signaling region spans residues Cys-186–Tyr-190. Residues Pro-191 to Leu-210 form an involved in dimerization region. Residues Val-196–Leu-216 form a helical membrane-spanning segment. Residues Ser-217–Thr-241 lie on the Cytoplasmic side of the membrane. The helical transmembrane segment at Val-242–Ile-261 threads the bilayer. The Extracellular segment spans residues Asp-262 to Lys-282. Residues Leu-266–Glu-268 form an involved in dimerization region. A helical transmembrane segment spans residues Trp-283 to Tyr-302. The Cytoplasmic segment spans residues Ala-303–Ser-352. Phosphoserine occurs at positions 319 and 321. Phosphoserine; by PKC and GRK6 is present on residues Ser-324 and Ser-325. The interval Leu-329 to Ser-352 is disordered. Ser-330 bears the Phosphoserine; by GRK6 mark. Residue Lys-331 forms a Glycyl lysine isopeptide (Lys-Gly) (interchain with G-Cter in ubiquitin) linkage. Low complexity predominate over residues His-337–Ser-352. Ser-339 is subject to Phosphoserine; by GRK6. 2 positions are modified to phosphoserine: Ser-348 and Ser-351.

It belongs to the G-protein coupled receptor 1 family. As to quaternary structure, monomer. Can form homodimers. Interacts with CD164. Interacts with ARRB2; the interaction is dependent on the C-terminal phosphorylation of CXCR4 and allows activation of MAPK1 and MAPK3. Interacts with ARR3; the interaction is dependent on the C-terminal phosphorylation of CXCR4 and modulates calcium mobilization. Interacts with RNF113A; the interaction, enhanced by CXCL12, promotes CXCR4 ubiquitination and subsequent degradation. Interacts (via the cytoplasmic C-terminal) with ITCH (via the WW domains I and II); the interaction, enhanced by CXCL12, promotes CXCR4 ubiquitination and leads to its degradation. Interacts with extracellular ubiquitin. Interacts with DBN1; this interaction is enhanced by antigenic stimulation. Following LPS binding, may form a complex with GDF5, HSP90AA1 and HSPA8. Post-translationally, phosphorylated on agonist stimulation. Rapidly phosphorylated on serine and threonine residues in the C-terminal. Phosphorylation at Ser-324 and Ser-325 leads to recruitment of ITCH, ubiquitination and protein degradation. Ubiquitinated after ligand binding, leading to its degradation. Ubiquitinated by ITCH at the cell membrane on agonist stimulation. The ubiquitin-dependent mechanism, endosomal sorting complex required for transport (ESCRT), then targets CXCR4 for lysosomal degradation. This process is dependent also on prior Ser-/Thr-phosphorylation in the C-terminal of CXCR4. Also binding of ARRB1 to STAM negatively regulates CXCR4 sorting to lysosomes though modulating ubiquitination of SFR5S. In terms of processing, sulfation is required for efficient binding of CXCL12/SDF-1alpha and promotes its dimerization. Post-translationally, O- and N-glycosylated. N-glycosylation can mask coreceptor function. The O-glycosylation chondroitin sulfate attachment does not affect interaction with CXCL12/SDF-1alpha nor its coreceptor activity.

It localises to the cell membrane. Its subcellular location is the cell junction. The protein localises to the early endosome. It is found in the late endosome. The protein resides in the lysosome. Its function is as follows. Receptor for the C-X-C chemokine CXCL12/SDF-1 that transduces a signal by increasing intracellular calcium ion levels and enhancing MAPK1/MAPK3 activation. Involved in the AKT signaling cascade. Plays a role in regulation of cell migration, e.g. during wound healing. Acts as a receptor for extracellular ubiquitin; leading to enhanced intracellular calcium ions and reduced cellular cAMP levels. Binds bacterial lipopolysaccharide (LPS) et mediates LPS-induced inflammatory response, including TNF secretion by monocytes. Involved in hematopoiesis and in cardiac ventricular septum formation. Also plays an essential role in vascularization of the gastrointestinal tract, probably by regulating vascular branching and/or remodeling processes in endothelial cells. Involved in cerebellar development. In the CNS, could mediate hippocampal-neuron survival. The polypeptide is C-X-C chemokine receptor type 4 (CXCR4) (Chlorocebus aethiops (Green monkey)).